The following is a 120-amino-acid chain: Large ribosomal subunit protein uL18 (120 aa).

Belongs to the universal ribosomal protein uL18 family. Part of the 50S ribosomal subunit; part of the 5S rRNA/L5/L18/L25 subcomplex. Contacts the 5S and 23S rRNAs.

Functionally, this is one of the proteins that bind and probably mediate the attachment of the 5S RNA into the large ribosomal subunit, where it forms part of the central protuberance. The protein is Large ribosomal subunit protein uL18 of Trichodesmium erythraeum (strain IMS101).